The following is a 351-amino-acid chain: Heat-inducible transcription repressor HrcA (351 aa).

It belongs to the HrcA family.

Functionally, negative regulator of class I heat shock genes (grpE-dnaK-dnaJ and groELS operons). Prevents heat-shock induction of these operons. This chain is Heat-inducible transcription repressor HrcA, found in Clostridium tetani (strain Massachusetts / E88).